Here is a 394-residue protein sequence, read N- to C-terminus: Ribulose bisphosphate carboxylase large chain (394 aa).

Lys-5 is subject to N6,N6,N6-trimethyllysine. Asn-114 and Thr-164 together coordinate substrate. The active-site Proton acceptor is the Lys-166. Lys-168 provides a ligand contact to substrate. Mg(2+) is bound by residues Lys-192, Asp-194, and Glu-195. Residue Lys-192 is modified to N6-carboxylysine. His-285 functions as the Proton acceptor in the catalytic mechanism. The substrate site is built by Arg-286, His-318, and Ser-370.

It belongs to the RuBisCO large chain family. Type I subfamily. As to quaternary structure, heterohexadecamer of 8 large chains and 8 small chains. The cofactor is Mg(2+).

It is found in the plastid. The protein resides in the chloroplast. It catalyses the reaction 2 (2R)-3-phosphoglycerate + 2 H(+) = D-ribulose 1,5-bisphosphate + CO2 + H2O. The enzyme catalyses D-ribulose 1,5-bisphosphate + O2 = 2-phosphoglycolate + (2R)-3-phosphoglycerate + 2 H(+). In terms of biological role, ruBisCO catalyzes two reactions: the carboxylation of D-ribulose 1,5-bisphosphate, the primary event in carbon dioxide fixation, as well as the oxidative fragmentation of the pentose substrate in the photorespiration process. Both reactions occur simultaneously and in competition at the same active site. This Victoria cruziana (Santa Cruz water lily) protein is Ribulose bisphosphate carboxylase large chain (rbcL).